A 120-amino-acid chain; its full sequence is Spermidine export protein MdtJ (120 aa).

4 helical membrane-spanning segments follow: residues 1-21 (MFYWILLALAIVAEITGTLSM), 31-51 (TGFILMLVMISLSYIFLSFAV), 54-74 (IALGVAYALWEGIGILLITLF), and 81-101 (EALSTMKIAGLATLVVGIVLI).

This sequence belongs to the drug/metabolite transporter (DMT) superfamily. Small multidrug resistance (SMR) (TC 2.A.7.1) family. MdtJ subfamily. Forms a complex with MdtI.

The protein localises to the cell inner membrane. Its function is as follows. Catalyzes the excretion of spermidine. This chain is Spermidine export protein MdtJ, found in Enterobacter sp. (strain 638).